The primary structure comprises 129 residues: MPMASPQTLVLYLLVLAVTEAWGQEAVIPGCHLHPFNVTVRSDRQGTCQGSHVAQACVGHCESSAFPSRYSVLVASGYRHNITSVSQCCTISGLKKVKVQLQCVGSRREELEIFTARACQCDMCRLSRY.

A signal peptide spans Met-1–Gly-23. 4 disulfide bridges follow: Cys-31/Cys-89, Cys-48/Cys-103, Cys-57/Cys-119, and Cys-61/Cys-121. Asn-37 and Asn-81 each carry an N-linked (GlcNAc...) asparagine glycan.

Belongs to the glycoprotein hormones subunit alpha family. Heterodimer with GPHB5; this heterodimer interacts with thyroid-stimulating hormone receptor (TSHR), and hence stimulates cAMP production. In terms of processing, glycosylated. In terms of tissue distribution, found in a variety of tissues.

It localises to the secreted. Its function is as follows. Functions as a heterodimeric glycoprotein hormone with GPHB5 able to bind and activate the thyroid-stimulating hormone receptor (TSHR), leading to increased cAMP production. Plays a central role in controlling thyroid cell metabolism. This is Glycoprotein hormone alpha-2 (GPHA2) from Homo sapiens (Human).